Consider the following 57-residue polypeptide: UPF0434 protein Spea_1772 (57 aa).

Belongs to the UPF0434 family.

This chain is UPF0434 protein Spea_1772, found in Shewanella pealeana (strain ATCC 700345 / ANG-SQ1).